We begin with the raw amino-acid sequence, 455 residues long: Protein YmfN (455 aa).

This sequence belongs to the phage terminase family.

This Escherichia coli (strain K12) protein is Protein YmfN (ymfN).